Consider the following 113-residue polypeptide: MKVSVAALSCLMLVAVLGSQAQFTNDAETELMMSKLPLENPVVLNSFHFAADCCTSYISQSIPCSLMKSYFETSSECSKPGVIFLTKKGRQVCAKPSGPGVQDCMKKLKPYSI.

An N-terminal signal peptide occupies residues 1 to 21 (MKVSVAALSCLMLVAVLGSQA). 3 cysteine pairs are disulfide-bonded: C53/C77, C54/C93, and C64/C104.

Belongs to the intercrine beta (chemokine CC) family. As to quaternary structure, monomer. In terms of processing, the N-terminal is proteolytically cleaved by proteases associated with inflammatory responses. The processed forms CCL15(22-92), CCL15(25-92) and CCL15(29-92) exhibit increase in CCR1-mediated signaling and chemotaxis assays in vitro. Most abundant in heart, skeletal muscle and adrenal gland. Lower levels in placenta, liver, pancreas and bone marrow. CCL15(22-92), CCL15(25-92) and CCL15(29-92) are found in high levels in synovial fluids from rheumatoid patients.

The protein localises to the secreted. Functionally, chemotactic factor that attracts T-cells and monocytes, but not neutrophils, eosinophils, or B-cells. Acts mainly via CC chemokine receptor CCR1. Also binds to CCR3. CCL15(22-92), CCL15(25-92) and CCL15(29-92) are more potent chemoattractants than the CCL15. The sequence is that of C-C motif chemokine 15 (CCL15) from Homo sapiens (Human).